The chain runs to 345 residues: NADPH dehydrogenase (345 aa).

Residue 23 to 26 coordinates FMN; sequence SPMC. Tyr28 is a binding site for substrate. The FMN site is built by Ala60 and Gln102. Substrate is bound at residue 164 to 167; sequence HGAH. FMN contacts are provided by residues Arg215 and 307-308; that span reads GR.

This sequence belongs to the NADH:flavin oxidoreductase/NADH oxidase family. NamA subfamily. Homotetramer. It depends on FMN as a cofactor.

It catalyses the reaction A + NADPH + H(+) = AH2 + NADP(+). Catalyzes the reduction of the double bond of an array of alpha,beta-unsaturated aldehydes and ketones. It also reduces the nitro group of nitroester and nitroaromatic compounds. It could have a role in detoxification processes. This is NADPH dehydrogenase from Bacillus thuringiensis subsp. konkukian (strain 97-27).